The chain runs to 316 residues: Mitochondrial distribution and morphology protein 12 (316 aa).

The 312-residue stretch at 1–312 folds into the SMP-LTD domain; sequence MSIDLEWNGL…FPNFHTLVLG (312 aa).

The protein belongs to the MDM12 family. As to quaternary structure, component of the ER-mitochondria encounter structure (ERMES) or MDM complex, composed of MMM1, MDM10, MDM12 and MDM34. An MMM1 homodimer associates with one molecule of MDM12 on each side in a pairwise head-to-tail manner, and the SMP-LTD domains of MMM1 and MDM12 generate a continuous hydrophobic tunnel for phospholipid trafficking.

The protein localises to the mitochondrion outer membrane. It is found in the endoplasmic reticulum membrane. Its function is as follows. Component of the ERMES/MDM complex, which serves as a molecular tether to connect the endoplasmic reticulum (ER) and mitochondria. Components of this complex are involved in the control of mitochondrial shape and protein biogenesis, and function in nonvesicular lipid trafficking between the ER and mitochondria. MDM12 is required for the interaction of the ER-resident membrane protein MMM1 and the outer mitochondrial membrane-resident beta-barrel protein MDM10. The MDM12-MMM1 subcomplex functions in the major beta-barrel assembly pathway that is responsible for biogenesis of all mitochondrial outer membrane beta-barrel proteins, and acts in a late step after the SAM complex. The MDM10-MDM12-MMM1 subcomplex further acts in the TOM40-specific pathway after the action of the MDM12-MMM1 complex. Essential for establishing and maintaining the structure of mitochondria and maintenance of mtDNA nucleoids. The chain is Mitochondrial distribution and morphology protein 12 from Postia placenta (strain ATCC 44394 / Madison 698-R) (Brown rot fungus).